The primary structure comprises 530 residues: Laccase-2 (530 aa).

The signal sequence occupies residues 1-23 (MLLSSAFVGSCLAILNFAAAVSA). Plastocyanin-like domains lie at 36–154 (NKVI…YDPE) and 167–311 (TTII…RYTN). An N-linked (GlcNAc...) asparagine glycan is attached at asparagine 82. The Cu cation site is built by histidine 88 and histidine 90. Intrachain disulfides connect cysteine 109–cysteine 520 and cysteine 141–cysteine 228. A glycan (N-linked (GlcNAc...) asparagine) is linked at asparagine 120. 2 residues coordinate Cu cation: histidine 133 and histidine 135. Residues asparagine 191, asparagine 240, asparagine 292, asparagine 311, asparagine 366, asparagine 375, asparagine 392, and asparagine 412 are each glycosylated (N-linked (GlcNAc...) asparagine). Residues 379–504 (YVNPTVPVLL…FAVVLAEAPQ (126 aa)) enclose the Plastocyanin-like 3 domain. The Cu cation site is built by histidine 428, histidine 431, histidine 433, histidine 484, cysteine 485, histidine 486, and histidine 490.

Belongs to the multicopper oxidase family. Requires Cu cation as cofactor.

The protein resides in the secreted. It carries out the reaction 4 hydroquinone + O2 = 4 benzosemiquinone + 2 H2O. Inhibited by chloride ions. Inhibited by citrate. Inhibited by oxalate. Activated by acetate. Its function is as follows. In vitro, has activity towards 2,2'-azino-bis(3-ethylbenzthiazoline-6-sulfonic acid) (ABTS), 2,6-dimethoxy-phenol, and guaiacol. Although brown rot fungi preferentially degrade hemicellulose and cellulose, the enzyme may contribute to generating small amounts of lignin breakdown products required for catalytic reactions. In Fomitopsis schrenkii (Brown rot fungus), this protein is Laccase-2.